Consider the following 168-residue polypeptide: CASP-like protein 1U1 (168 aa).

Topologically, residues 1-6 are cytoplasmic; sequence MDGAAR. The chain crosses the membrane as a helical span at residues 7–27; the sequence is AVSLFFRIAVVGLSVAAAVVM. Topologically, residues 28–49 are extracellular; that stretch reads ATASQAFPFNYGGAVSYTKYPA. Residues 50–70 form a helical membrane-spanning segment; sequence FVYFVVAAVVSAVCSAAALYL. Residues 71–80 lie on the Cytoplasmic side of the membrane; that stretch reads SVVREAAAGW. A helical membrane pass occupies residues 81 to 101; the sequence is AVALLDVVTMGLLFSAAGAVF. Topologically, residues 102–138 are extracellular; sequence AVRRMAPLYLGVAGADTVAGRWVNGEFCHAAGAFCWR. The chain crosses the membrane as a helical span at residues 139-159; sequence VTTSAIICAFAAAAVSVAVLT. Residues 160-168 lie on the Cytoplasmic side of the membrane; the sequence is KGARHRGKH.

The protein belongs to the Casparian strip membrane proteins (CASP) family. In terms of assembly, homodimer and heterodimers.

The protein localises to the cell membrane. In Oryza sativa subsp. japonica (Rice), this protein is CASP-like protein 1U1.